A 72-amino-acid chain; its full sequence is Translation initiation factor IF-1 (72 aa).

Residues 1–72 (MSNDDSIEFE…TKGRITYRMK (72 aa)) enclose the S1-like domain.

It belongs to the IF-1 family. Component of the 30S ribosomal translation pre-initiation complex which assembles on the 30S ribosome in the order IF-2 and IF-3, IF-1 and N-formylmethionyl-tRNA(fMet); mRNA recruitment can occur at any time during PIC assembly.

The protein resides in the cytoplasm. Functionally, one of the essential components for the initiation of protein synthesis. Stabilizes the binding of IF-2 and IF-3 on the 30S subunit to which N-formylmethionyl-tRNA(fMet) subsequently binds. Helps modulate mRNA selection, yielding the 30S pre-initiation complex (PIC). Upon addition of the 50S ribosomal subunit IF-1, IF-2 and IF-3 are released leaving the mature 70S translation initiation complex. The polypeptide is Translation initiation factor IF-1 (Xanthomonas campestris pv. campestris (strain B100)).